Here is a 1050-residue protein sequence, read N- to C-terminus: Ankyrin repeat domain-containing protein 27 (1050 aa).

A sufficient for GEF activity towards RAB21 region spans residues 1 to 372 (MALYDEDLLK…RQGSLSAKPP (372 aa)). A VPS9 domain is found at 233–371 (ASEDAAFNKI…IRQGSLSAKP (139 aa)). ANK repeat units follow at residues 396–426 (SPTDCLFKHIASGNQKEVERLLSQEDHDKDT), 462–491 (RGHTPLHVAAVCGQASLIDLLVSKGAMVNA), 495–524 (HGATPLHLACQKGYQSVTLLLLHYKASAEV), 528–560 (NGNTPLHLACTYGHEDCVKALVYYDVESCRLDI), 564–593 (KGDTPLHIAARWGYQGVIETLLQNGASTEI), and 597–627 (LKETPLKCALNSKILSVMEAYHLSFERRQKS). A sufficient for interaction with VPS29 region spans residues 396–460 (SPTDCLFKHI…PSVVTPFSRD (65 aa)). An interaction with RAB38 region spans residues 451-600 (PSVVTPFSRD…TEIQNRLKET (150 aa)). An interaction with RAB32 region spans residues 451–730 (PSVVTPFSRD…APAQKRLAKV (280 aa)). Positions 625–665 (QKSSEAPVQSPQRSVDSISQESSTSSFSSMSASSRQEETKK) are disordered. The span at 628-637 (SEAPVQSPQR) shows a compositional bias: polar residues. A compositionally biased stretch (low complexity) spans 638–658 (SVDSISQESSTSSFSSMSASS). Residues 658 to 707 (SRQEETKKDYREVEKLLRAVADGDLEMVRYLLEWTEEDLEDAEDTVSAAD) form a required for interaction with VAMP7 region. 5 ANK repeats span residues 668–698 (REVEKLLRAVADGDLEMVRYLLEWTEEDLED), 743–772 (DGSSPLHVAALHGRADLIPLLLKHGANAGA), 776–805 (DQAVPLHLACQQGHFQVVKCLLDSNAKPNK), 809–838 (SGNTPLIYACSGGHHELVALLLQHGASINA), and 842–871 (KGNTALHEAVIEKHVFVVELLLLHGASVQV). Residues 692-746 (TEEDLEDAEDTVSAADPEFCHPLCQCPKCAPAQKRLAKVPASGLGVNVTSQDGSS) are sufficient for interaction with VPS29. Residues Ser962 and Ser970 each carry the phosphoserine modification. The segment at 987–1050 (PAQSGSHAAE…TPQEVSASRS (64 aa)) is disordered. The segment covering 994–1004 (AAEKGNSDWPE) has biased composition (basic and acidic residues). The residue at position 1023 (Thr1023) is a Phosphothreonine. Over residues 1040-1050 (STPQEVSASRS) the composition is skewed to polar residues.

In terms of assembly, interacts with RAB21 (GDP-bound form), VPS29, RAB32 (GTP-bound form), RAB38 (GTP-bound form), VAMP7, KIF5A, KIF5C, GOLGA4. Interacts with low affinity with RAB5. ANKRD27:RAB32 heterodimers can homodimerize to form tetramers. Can interact with RAB38 or RAB32, VPS29 and VAMP7 simultaneously. A decreased interaction with RAB32 seen in the presence of SGSM2.

It is found in the early endosome. It localises to the late endosome. The protein localises to the cytoplasmic vesicle membrane. Its subcellular location is the lysosome. The protein resides in the cell membrane. It is found in the melanosome. In terms of biological role, may be a guanine exchange factor (GEF) for Rab21, Rab32 and Rab38 and regulate endosome dynamics. May regulate the participation of VAMP7 in membrane fusion events; in vitro inhibits VAMP7-mediated SNARE complex formation by trapping VAMP7 in a closed, fusogenically inactive conformation. Involved in peripheral melanosomal distribution of TYRP1 in melanocytes; the function, which probably is implicating vesicle-trafficking, includes cooperation with Rab32, Rab38 and VAMP7. Involved in the regulation of neurite growth; the function seems to require its GEF activity, probably towards Rab21, and VAMP7 but not Rab32/38. Proposed to be involved in Golgi sorting of VAMP7 and transport of VAMP7 vesicles to the cell surface; the function seems to implicate kinesin heavy chain isoform 5 proteins, GOLGA4, RAB21 and MACF1. Required for the colocalization of VAMP7 and Rab21, probably on TGN sites. Involved in GLUT1 endosome-to-plasma membrane trafficking; the function is dependent of association with VPS29. Regulates the proper trafficking of melanogenic enzymes TYR, TYRP1 and DCT/TYRP2 to melanosomes in melanocytes. This chain is Ankyrin repeat domain-containing protein 27 (ANKRD27), found in Homo sapiens (Human).